A 257-amino-acid polypeptide reads, in one-letter code: MRILLTNDDGIHAEGLAALERIARTLSDDVWIVAPETDQSGLAHSLSLSEPLRLRKISDKHFALRGTPTDCVIMGIRQVMDIKPDLVLSGVNSGSNVADDVTYSGTIAGAIEGTMQGVRSFALSQAYLYEDGARIVPWEVCETHAPALLEKLMVLDLPEGTFLNLNFPNCRPGEVDGAEVTMQGKLAFNLQVDARSDGRGFPYYWLKFGERAGAFIEGTDIHALKHNKISVTPLKLDLTDYSVTDRVARALGYGAQV.

Positions 8, 9, 40, and 92 each coordinate a divalent metal cation.

Belongs to the SurE nucleotidase family. It depends on a divalent metal cation as a cofactor.

It localises to the cytoplasm. It carries out the reaction a ribonucleoside 5'-phosphate + H2O = a ribonucleoside + phosphate. Functionally, nucleotidase that shows phosphatase activity on nucleoside 5'-monophosphates. In Rhizobium leguminosarum bv. trifolii (strain WSM2304), this protein is 5'-nucleotidase SurE.